We begin with the raw amino-acid sequence, 646 residues long: Envelope glycoprotein (646 aa).

Residues 1 to 25 (MLSVAQSSALFLLQAICILYITKLT) form the signal peptide. The Lumenal segment spans residues 26–119 (IPTPVSEINL…INYLLRFISA (94 aa)). N-linked (GlcNAc...) asparagine; by host glycans are attached at residues Asn-72, Asn-80, and Asn-101. The chain crosses the membrane as a helical span at residues 120 to 140 (IIVYLLLSISKQGIFLFFSIV). Topologically, residues 141 to 176 (HYSFKFIKNKKSCNICGNDFYFIHIDCPKPDFTKRS) are cytoplasmic. The helical transmembrane segment at 177–197 (DFHMMFYIILFLSLFFVVTHA) threads the bilayer. The Lumenal portion of the chain corresponds to 198-588 (DDNVYNYYEH…KNLLYIDYKK (391 aa)). 2 N-linked (GlcNAc...) asparagine; by host glycosylation sites follow: Asn-247 and Asn-336. A helical transmembrane segment spans residues 589-609 (IIFVFLVAIISIGIFLRSPYM). The Cytoplasmic portion of the chain corresponds to 610–646 (LLSSILKFRKRRKVVATNRSEQLVMDDDVDVFIGPPS).

As to quaternary structure, G2 and G1 interact with each other. In terms of processing, specific enzymatic cleavages in vivo yield mature proteins including glycoprotein G1 and glycoprotein G2. Glycosylated. Glycosylation is essential for proper subcellular location.

The protein resides in the virion membrane. Its subcellular location is the host Golgi apparatus membrane. Functionally, glycoprotein G2 and glycoprotein G1 interact with each other and are present at the surface of the virion. They are able to attach the virion to a cell receptor and to promote fusion of membranes after endocytosis of the virion. This chain is Envelope glycoprotein, found in European mountain ash ringspot-associated virus (isolate Sorbus aucuparia) (EMARAV).